The following is a 394-amino-acid chain: Elongation factor Tu (394 aa).

In terms of domain architecture, tr-type G spans Lys-10–Glu-204. The G1 stretch occupies residues Gly-19–Thr-26. GTP is bound at residue Gly-19–Thr-26. Thr-26 is a Mg(2+) binding site. Residues Gly-60 to Asn-64 are G2. Residues Asp-81–Gly-84 form a G3 region. GTP is bound by residues Asp-81–His-85 and Asn-136–Asp-139. The G4 stretch occupies residues Asn-136–Asp-139. The G5 stretch occupies residues Ser-174–Leu-176.

This sequence belongs to the TRAFAC class translation factor GTPase superfamily. Classic translation factor GTPase family. EF-Tu/EF-1A subfamily. Monomer.

It is found in the cytoplasm. The enzyme catalyses GTP + H2O = GDP + phosphate + H(+). In terms of biological role, GTP hydrolase that promotes the GTP-dependent binding of aminoacyl-tRNA to the A-site of ribosomes during protein biosynthesis. The chain is Elongation factor Tu from Histophilus somni (strain 129Pt) (Haemophilus somnus).